Consider the following 107-residue polypeptide: U1-lycotoxin-Ls1b (107 aa).

The first 20 residues, methionine 1–serine 20, serve as a signal peptide directing secretion. Residues glutamate 21 to arginine 41 constitute a propeptide that is removed on maturation. 4 disulfides stabilise this stretch: cysteine 44–cysteine 59, cysteine 51–cysteine 68, cysteine 58–cysteine 86, and cysteine 70–cysteine 84.

It belongs to the neurotoxin 19 (CSTX) family. 04 (U1-Lctx) subfamily. In terms of tissue distribution, expressed by the venom gland.

It localises to the secreted. The polypeptide is U1-lycotoxin-Ls1b (Lycosa singoriensis (Wolf spider)).